Here is a 518-residue protein sequence, read N- to C-terminus: Probable cytochrome P450 317a1 (518 aa).

Cys-461 is a binding site for heme.

It belongs to the cytochrome P450 family. Heme is required as a cofactor.

The protein resides in the endoplasmic reticulum membrane. The protein localises to the microsome membrane. Functionally, may be involved in the metabolism of insect hormones and in the breakdown of synthetic insecticides. In Drosophila melanogaster (Fruit fly), this protein is Probable cytochrome P450 317a1 (Cyp317a1).